The sequence spans 186 residues: Probable peptidoglycan L,D-endopeptidase MepK (186 aa).

A signal peptide spans 1-30 (MNYVDQNKRKWLSLGGIALGISILPNSVLA). Residues His134, Asp141, and His174 each contribute to the Zn(2+) site.

It belongs to the peptidase M15 family. Zn(2+) is required as a cofactor.

Its pathway is cell wall biogenesis; cell wall polysaccharide biosynthesis. Functionally, l,D-endopeptidase that cleaves meso-diaminopimelic acid (mDAP)-mDAP cross-links in peptidoglycan. It works in conjunction with other elongation-specific D,D-endopeptidases to make space for efficient incorporation of nascent peptidoglycan strands into the sacculus and thus enable cell wall expansion. The polypeptide is Probable peptidoglycan L,D-endopeptidase MepK (Haemophilus influenzae (strain ATCC 51907 / DSM 11121 / KW20 / Rd)).